The following is a 335-amino-acid chain: Peflin (335 aa).

The span at 23 to 37 (AMEETRREFEKEKQR) shows a compositional bias: basic and acidic residues. Residues 23–92 (AMEETRREFE…SPRHTKTPVD (70 aa)) are disordered. The segment covering 43–53 (VTQAQTPNTRV) has biased composition (polar residues). EF-hand domains are found at residues 144–192 (KVAP…DDNS), 198–223 (SVDALINLFGASRFGTVNQAEFIALY), 224–259 (KRVKSWRKVYVDNDINGSLTISVSEFHNSLQELGYL), 260–300 (IPFE…LMRL), and 301–332 (TKLFRKFDTNQEGIATIQYKDFIDATLYLGRF). The Ca(2+) site is built by D170, R176, and E181. Residues D237, N239, S241, T243, and E248 each coordinate Ca(2+).

In terms of assembly, homodimer.

The protein resides in the cytoplasm. The protein localises to the nucleus. It is found in the bud tip. Its subcellular location is the bud neck. Functionally, calcium-binding protein that is required for polar bud growth and cell wall abscission. Can also bind zinc ions. The protein is Peflin (PEF1) of Saccharomyces cerevisiae (strain ATCC 204508 / S288c) (Baker's yeast).